Consider the following 526-residue polypeptide: Protein spinster homolog 1 (526 aa).

Residues 1-44 form a disordered region; that stretch reads MTSRRSHGDVTPFLTQADNTEEEGVRDPESQSSDEEEEEGKDHG. Transmembrane regions (helical) follow at residues 59–79, 98–118, 126–146, 159–179, 187–207, 218–238, 272–292, 321–341, 355–375, 384–404, 419–439, and 463–483; these read VIIVIILFYINLLNYMDRFTV, GLVQTVFICSYMFLAPVFGYL, LIMCVGISFWSLVTLLSSFVS, LVGVGEASYSTIAPTIIADLF, MLSFFYFATPVGCGLGYIVGS, WALRVTPGLGLLAVLLLIFVA, FILSTFGFTTVAFVTGALALW, MIFGGITCITGILGVLTGVEI, LVCAVGMISSAPFLFLSLAFA, VFIFIGETLLSLNWALVADIL, LQIVVSHLLGDAGSPYLIGVI, and MICAFVGVIGGGFFLTTALFI.

The protein belongs to the major facilitator superfamily. Spinster (TC 2.A.1.49) family.

It localises to the lysosome membrane. It catalyses the reaction a 1-acyl-sn-glycero-3-phosphocholine(out) + H(+)(out) = a 1-acyl-sn-glycero-3-phosphocholine(in) + H(+)(in). The enzyme catalyses a 1-acyl-sn-glycero-3-phosphoethanolamine(out) + H(+)(out) = a 1-acyl-sn-glycero-3-phosphoethanolamine(in) + H(+)(in). The catalysed reaction is a 1-O-(1Z-alkenyl)-sn-glycero-3-phosphocholine(out) + H(+)(out) = a 1-O-(1Z-alkenyl)-sn-glycero-3-phosphocholine(in) + H(+)(in). It carries out the reaction a 1-O-(1Z-alkenyl)-sn-glycero-3-phosphoethanolamine(out) + H(+)(out) = a 1-O-(1Z-alkenyl)-sn-glycero-3-phosphoethanolamine(in) + H(+)(in). In terms of biological role, mediates the rate-limiting, proton-dependent, lysosomal efflux of lysophospholipids. Selective for zwitterionic headgroups such as lysophosphatidylcholine (LPC) and lysophosphatidylethanolamine (LPE). Essential player in lysosomal homeostasis. In Xenopus laevis (African clawed frog), this protein is Protein spinster homolog 1 (spns1).